The primary structure comprises 119 residues: Protein yippee-like 3 (119 aa).

In terms of domain architecture, Yippee spans 19–116; sequence RRYSCVHCRA…IELSHMIKDN (98 aa). Zn(2+) contacts are provided by cysteine 23, cysteine 26, cysteine 79, and cysteine 82.

The protein belongs to the yippee family.

The protein localises to the nucleus. It is found in the nucleolus. In terms of biological role, may be involved in proliferation and apoptosis in myeloid precursor cells. This chain is Protein yippee-like 3 (ypel3), found in Danio rerio (Zebrafish).